The following is a 29-amino-acid chain: Glucagon (29 aa).

Belongs to the glucagon family.

The protein localises to the secreted. Its function is as follows. Glucagon plays a key role in glucose metabolism and homeostasis. Regulates blood glucose by increasing gluconeogenesis and decreasing glycolysis. This chain is Glucagon (GCG), found in Meleagris gallopavo (Wild turkey).